The chain runs to 365 residues: Probable caffeine synthase 4 (365 aa).

Tyrosine 18 lines the S-adenosyl-L-homocysteine pocket. Threonine 25 lines the caffeine pocket. The S-adenosyl-L-homocysteine site is built by cysteine 61, asparagine 66, aspartate 98, leucine 99, serine 134, and phenylalanine 135. Tyrosine 152, histidine 155, and tryptophan 156 together coordinate caffeine. Residues asparagine 173, aspartate 259, phenylalanine 261, and asparagine 262 each contribute to the Mg(2+) site. Phenylalanine 317 contributes to the caffeine binding site.

The protein belongs to the methyltransferase superfamily. Type-7 methyltransferase family. It depends on Mg(2+) as a cofactor.

It functions in the pathway alkaloid biosynthesis. Its function is as follows. May be involved in the biosynthesis of caffeine. This Camellia sinensis (Tea plant) protein is Probable caffeine synthase 4.